The following is a 381-amino-acid chain: Succinyl-diaminopimelate desuccinylase (381 aa).

His-72 serves as a coordination point for Zn(2+). Residue Asp-74 is part of the active site. Residue Asp-105 participates in Zn(2+) binding. Residue Glu-139 is the Proton acceptor of the active site. Glu-140, Glu-168, and His-354 together coordinate Zn(2+).

Belongs to the peptidase M20A family. DapE subfamily. Homodimer. The cofactor is Zn(2+). It depends on Co(2+) as a cofactor.

It catalyses the reaction N-succinyl-(2S,6S)-2,6-diaminopimelate + H2O = (2S,6S)-2,6-diaminopimelate + succinate. Its pathway is amino-acid biosynthesis; L-lysine biosynthesis via DAP pathway; LL-2,6-diaminopimelate from (S)-tetrahydrodipicolinate (succinylase route): step 3/3. In terms of biological role, catalyzes the hydrolysis of N-succinyl-L,L-diaminopimelic acid (SDAP), forming succinate and LL-2,6-diaminopimelate (DAP), an intermediate involved in the bacterial biosynthesis of lysine and meso-diaminopimelic acid, an essential component of bacterial cell walls. The polypeptide is Succinyl-diaminopimelate desuccinylase (Shewanella sp. (strain MR-4)).